Reading from the N-terminus, the 148-residue chain is UPF0591 membrane protein C15E1.02c (148 aa).

3 helical membrane-spanning segments follow: residues 14-34 (AILL…GPLM), 80-102 (LLQL…VFGA), and 122-142 (ILVK…ALIG).

This sequence belongs to the UPF0591 family.

The protein localises to the membrane. This is UPF0591 membrane protein C15E1.02c from Schizosaccharomyces pombe (strain 972 / ATCC 24843) (Fission yeast).